The primary structure comprises 257 residues: Type III pantothenate kinase (257 aa).

Residue 6–13 (DSGNTNTV) coordinates ATP. Residue 108–111 (GADR) coordinates substrate. D110 acts as the Proton acceptor in catalysis. D130 is a K(+) binding site. T133 provides a ligand contact to ATP. A substrate-binding site is contributed by T185.

This sequence belongs to the type III pantothenate kinase family. As to quaternary structure, homodimer. NH4(+) is required as a cofactor. The cofactor is K(+).

It localises to the cytoplasm. The catalysed reaction is (R)-pantothenate + ATP = (R)-4'-phosphopantothenate + ADP + H(+). It participates in cofactor biosynthesis; coenzyme A biosynthesis; CoA from (R)-pantothenate: step 1/5. Its function is as follows. Catalyzes the phosphorylation of pantothenate (Pan), the first step in CoA biosynthesis. The sequence is that of Type III pantothenate kinase from Rhodospirillum rubrum (strain ATCC 11170 / ATH 1.1.1 / DSM 467 / LMG 4362 / NCIMB 8255 / S1).